Reading from the N-terminus, the 320-residue chain is MARNKIALIGSGMIGGTLAHLAGLKELGDVVLFDIAEGTPQGKGLDIAESSPVDGFDAKFTGANDYAAIEGADVVIVTAGVPRKPGMSRDDLLGINLKVMEQVGAGIKKYAPEAFVICITNPLDAMVWALQKFSGLPAHKVVGMAGVLDSARFRYFLSEEFNVSVEDVTAFVLGGHGDSMVPLARYSTVAGIPLPDLVKMGWTSQDKLDKIIQRTRDGGAEIVGLLKTGSAFYAPAASAIQMAESYLKDKKRVLPVAAQLSGQYGVKDMYVGVPTVIGANGVERIIEIDLDKDEKAQFDKSVASVAGLCEACIGIAPSLK.

NAD(+)-binding positions include 10-15 and Asp-34; that span reads GSGMIG. Residues Arg-83 and Arg-89 each coordinate substrate. NAD(+) contacts are provided by residues Asn-96 and 119-121; that span reads ITN. The substrate site is built by Asn-121 and Arg-152. His-176 (proton acceptor) is an active-site residue.

Belongs to the LDH/MDH superfamily. MDH type 3 family.

The enzyme catalyses (S)-malate + NAD(+) = oxaloacetate + NADH + H(+). Its function is as follows. Catalyzes the reversible oxidation of malate to oxaloacetate. The polypeptide is Malate dehydrogenase (Brucella melitensis biotype 2 (strain ATCC 23457)).